Here is a 319-residue protein sequence, read N- to C-terminus: Acetyl esterase (319 aa).

The Involved in the stabilization of the negatively charged intermediate by the formation of the oxyanion hole motif lies at 91–93; sequence HGG. Residues serine 165, aspartate 262, and histidine 292 contribute to the active site.

This sequence belongs to the 'GDXG' lipolytic enzyme family. As to quaternary structure, homodimer. Interacts with MalT and MelA.

The protein resides in the cytoplasm. In terms of biological role, displays esterase activity towards short chain fatty esters (acyl chain length of up to 8 carbons). Able to hydrolyze triacetylglycerol (triacetin) and tributyrylglycerol (tributyrin), but not trioleylglycerol (triolein) or cholesterol oleate. Negatively regulates MalT activity by antagonizing maltotriose binding. Inhibits MelA galactosidase activity. The chain is Acetyl esterase from Escherichia coli O6:H1 (strain CFT073 / ATCC 700928 / UPEC).